Here is a 507-residue protein sequence, read N- to C-terminus: ATP synthase subunit alpha, chloroplastic (507 aa).

ATP is bound at residue 170–177; that stretch reads GDRQTGKT.

This sequence belongs to the ATPase alpha/beta chains family. In terms of assembly, F-type ATPases have 2 components, CF(1) - the catalytic core - and CF(0) - the membrane proton channel. CF(1) has five subunits: alpha(3), beta(3), gamma(1), delta(1), epsilon(1). CF(0) has four main subunits: a, b, b' and c.

The protein localises to the plastid. The protein resides in the chloroplast thylakoid membrane. It carries out the reaction ATP + H2O + 4 H(+)(in) = ADP + phosphate + 5 H(+)(out). Functionally, produces ATP from ADP in the presence of a proton gradient across the membrane. The alpha chain is a regulatory subunit. The polypeptide is ATP synthase subunit alpha, chloroplastic (Oenothera glazioviana (Large-flowered evening primrose)).